Reading from the N-terminus, the 78-residue chain is Large ribosomal subunit protein bL28 (78 aa).

The interval 1 to 21 is disordered; sequence MSRVCQVTGKKPMVGNNRSHA.

This sequence belongs to the bacterial ribosomal protein bL28 family.

The protein is Large ribosomal subunit protein bL28 of Shewanella loihica (strain ATCC BAA-1088 / PV-4).